The sequence spans 309 residues: MSTVLVFGHKNPDTDTITSALAYAELKKKLGMDAEAVRLGEVNGETQYALDHFRVKAPRLIESVKGEAEEVILVDHNEFQQSADGIEDVRILEVIDHHRIANFQTADPLYYRAEPVGCTATILLKLYKEHGVEIAADMAGLMLSAIISDSLLFKSPTCTDEDIKAAKELAEIAGVDAETYGLEMLKAGADLSQKTIEELISLDAKEFAMGDYRVEIAQVNTVDANDVLNRKAEVEAAIANTVAAKNLDLFVFAITNILTNDSEAIVVGPKPELFEQAFNVTLQNGLATLPGVVSRKKQIVPFLTEAATK.

Mn(2+) is bound by residues His9, Asp13, Asp15, Asp75, His97, and Asp149.

The protein belongs to the PPase class C family. Mn(2+) is required as a cofactor.

Its subcellular location is the cytoplasm. The catalysed reaction is diphosphate + H2O = 2 phosphate + H(+). In Exiguobacterium sp. (strain ATCC BAA-1283 / AT1b), this protein is Probable manganese-dependent inorganic pyrophosphatase.